The sequence spans 165 residues: Probable chemoreceptor glutamine deamidase CheD (165 aa).

Belongs to the CheD family.

The catalysed reaction is L-glutaminyl-[protein] + H2O = L-glutamyl-[protein] + NH4(+). In terms of biological role, probably deamidates glutamine residues to glutamate on methyl-accepting chemotaxis receptors (MCPs), playing an important role in chemotaxis. The protein is Probable chemoreceptor glutamine deamidase CheD of Geobacillus kaustophilus (strain HTA426).